We begin with the raw amino-acid sequence, 106 residues long: Thiosulfate sulfurtransferase GlpE (106 aa).

One can recognise a Rhodanese domain in the interval 16–104 (REQGAVLVDV…WRTTYPQETV (89 aa)). C64 acts as the Cysteine persulfide intermediate in catalysis.

The protein belongs to the GlpE family.

The protein localises to the cytoplasm. The enzyme catalyses thiosulfate + hydrogen cyanide = thiocyanate + sulfite + 2 H(+). It carries out the reaction thiosulfate + [thioredoxin]-dithiol = [thioredoxin]-disulfide + hydrogen sulfide + sulfite + 2 H(+). Its function is as follows. Transferase that catalyzes the transfer of sulfur from thiosulfate to thiophilic acceptors such as cyanide or dithiols. May function in a CysM-independent thiosulfate assimilation pathway by catalyzing the conversion of thiosulfate to sulfite, which can then be used for L-cysteine biosynthesis. This Pseudomonas syringae pv. syringae (strain B728a) protein is Thiosulfate sulfurtransferase GlpE.